A 255-amino-acid polypeptide reads, in one-letter code: NAD kinase (255 aa).

Catalysis depends on Asp-44, which acts as the Proton acceptor. NAD(+)-binding positions include 44-45 (DG), His-49, 114-115 (NE), Asp-144, Ala-152, 155-160 (SAYNLS), and Gln-216.

The protein belongs to the NAD kinase family. A divalent metal cation is required as a cofactor.

It localises to the cytoplasm. It carries out the reaction NAD(+) + ATP = ADP + NADP(+) + H(+). Functionally, involved in the regulation of the intracellular balance of NAD and NADP, and is a key enzyme in the biosynthesis of NADP. Catalyzes specifically the phosphorylation on 2'-hydroxyl of the adenosine moiety of NAD to yield NADP. The sequence is that of NAD kinase from Rickettsia canadensis (strain McKiel).